The primary structure comprises 866 residues: N-alpha-acetyltransferase 15, NatA auxiliary subunit (866 aa).

TPR repeat units lie at residues 46 to 79, 80 to 113, 148 to 184, and 224 to 257; these read GETL…DLKS, HVCW…DKDN, RASW…SPDK, and LAVE…NPEN. Lys-262 is subject to N6-acetyllysine. The residue at position 302 (Ser-302) is a Phosphoserine. 3 TPR repeats span residues 374–407, 409–441, and 485–518; these read LWVQ…TPTL, ELFL…DTAD, and MWFQ…FIEI. The tract at residues 500–866 is interaction with HYPK; that stretch reads KFGEALKKCH…AEAEELANEI (367 aa). Ser-537 and Ser-588 each carry phosphoserine. Over residues 579–594 the composition is skewed to basic and acidic residues; it reads EHEADTANMSDKELKK. Positions 579 to 642 are disordered; it reads EHEADTANMS…EEIGGPKEEL (64 aa). The span at 595–604 shows a compositional bias: basic residues; that stretch reads LRNKQRRAQK. Over residues 606–621 the composition is skewed to basic and acidic residues; sequence AQIEEEKKNAEKEKQQ. The short motif at 612-629 is the Bipartite nuclear localization signal element; it reads KKNAEKEKQQRNQKKKKD. A TPR 8 repeat occupies 672-705; it reads IETHLFAFEIYFRKEKFLLMLQSVKRAFAIDSSH. Lys-735 and Lys-756 each carry N6-acetyllysine. A phosphoserine mark is found at Ser-855 and Ser-856.

In terms of assembly, component of the N-terminal acetyltransferase A complex (also called the NatA complex) composed of NAA10 and NAA15. Within the complex interacts with NAA10. Component of the N-terminal acetyltransferase A (NatA)/HYPK complex at least composed of NAA10, NAA15 and HYPK, which has N-terminal acetyltransferase activity. In complex with NAA10, interacts with HYPK. Component of the N-terminal acetyltransferase E (NatE) complex at least composed of NAA10, NAA15 and NAA50. Within the complex interacts with NAA10; the interaction is required for binding to NAA50. Interacts with NAAT50. The interaction of the NatA complex with NAA50 reduces the acetylation activity of the NatA complex. Component of the N-terminal acetyltransferase E (NatE)/HYPK complex at least composed of NAA10, NAA15, NAA50 and HYPK. In complex with NAA10 interacts with HYPK; the interaction with HYPK reduces the capacity of the NatA complex to interact with NAA50. Interacts with NAA11. Interacts with XRCC6 and XRCC5. In terms of processing, cleaved by caspases during apoptosis, resulting in a stable 35 kDa fragment. In terms of tissue distribution, expressed at high levels in testis and in ocular endothelial cells. Also found in brain (corpus callosum), heart, colon, bone marrow and at lower levels in most adult tissues, including thyroid, liver, pancreas, mammary and salivary glands, lung, ovary, urogenital system and upper gastrointestinal tract. Overexpressed in gastric cancer, in papillary thyroid carcinomas and in a Burkitt lymphoma cell line (Daudi). Specifically suppressed in abnormal proliferating blood vessels in eyes of patients with proliferative diabetic retinopathy.

The protein resides in the cytoplasm. It localises to the nucleus. Auxillary subunit of N-terminal acetyltransferase complexes which display alpha (N-terminal) acetyltransferase (NAT) activity. The NAT activity may be important for vascular, hematopoietic and neuronal growth and development. Required to control retinal neovascularization in adult ocular endothelial cells. In complex with XRCC6 and XRCC5 (Ku80), up-regulates transcription from the osteocalcin promoter. This is N-alpha-acetyltransferase 15, NatA auxiliary subunit (NAA15) from Homo sapiens (Human).